We begin with the raw amino-acid sequence, 381 residues long: MIIKLIFLICFKIVLSINYWVRYNDTVTLNSNINSETEGIFWNFYNNTFNTIATCGKKNNVCECSNYDKSLYNITNNCSLTIFPNNTKIFNTTYQLVYSRNRINYTINLLLPVTSPIITYNCTQSLITCEKTNGTNIHLFLNLNDTINEYTNKSFLNYYWNSSELNNIFLATCIINNTLNSANTTKVINCTNPLLKSYQNYFLENIHTLFYMIIFIVSGITISIFISIITFLSLRKRKKHVEEIESPPPESNEEEQCQHDDTTSIHEPSPREPLLPKPYSRYQYNTPIYYMRPSTQPLNPFPLPKPCPPPKPCPPPKPCPPPKPCPPPKPCPPPKPCPPPKPCPPPESYSPPKPLPSIPLLPNIPPLSTQNISLIHVDRII.

Residues 1–16 (MIIKLIFLICFKIVLS) form the signal peptide. Over 17-208 (INYWVRYNDT…QNYFLENIHT (192 aa)) the chain is Extracellular. Residues Asn24, Asn73, Asn77, Asn85, Asn91, Asn104, Asn121, Asn133, Asn144, Asn176, Asn183, and Asn189 are each glycosylated (N-linked (GlcNAc...) asparagine; by host). Disulfide bonds link Cys122-Cys190 and Cys129-Cys173. A helical transmembrane segment spans residues 209–229 (LFYMIIFIVSGITISIFISII). Over 230–381 (TFLSLRKRKK…ISLIHVDRII (152 aa)) the chain is Cytoplasmic. The tract at residues 243–278 (EIESPPPESNEEEQCQHDDTTSIHEPSPREPLLPKP) is disordered. The span at 256-270 (QCQHDDTTSIHEPSP) shows a compositional bias: basic and acidic residues. Repeat copies occupy residues 305–310 (KPCPPP), 311–316 (KPCPPP), 317–322 (KPCPPP), 323–328 (KPCPPP), 329–334 (KPCPPP), 335–340 (KPCPPP), and 341–346 (KPCPPP). Residues 305 to 334 (KPCPPPKPCPPPKPCPPPKPCPPPKPCPPP) form a 7 X 6 AA tandem repeats of K-[LP]-C-[PRS]-[PS]-[PS] region. The segment at 341–362 (KPCPPPESYSPPKPLPSIPLLP) is disordered.

This sequence belongs to the asfivirus CD2 homolog protein family. In terms of assembly, both glycosylated and nonglycosylated forms interact (via C-terminus) with the host AP-1 complex. Post-translationally, cleaved into two fragments of 63 kDa and 26 kDa containing respectively the glycosylated N-terminus and the nonglycosylated C-terminus. A full-length 89-kDa glycosylated form also exists.

It is found in the host membrane. The protein resides in the virion membrane. Its subcellular location is the host Golgi apparatus. Functionally, may play an immunosuppressive role by inhibiting lymphocyte proliferation and subsequently facilitating viral replication and generalization of infection. Responsible for viral hemadsorption, which may help viral spread. Increases virus replication in the tick vector at the step of virus uptake or replication in the tick gut. May play a role in the host Golgi reorganization to yield viral factories. May play a role in host cell penetration. The protein is CD2 homolog of African swine fever virus (isolate Warthog/Namibia/Wart80/1980) (ASFV).